The sequence spans 173 residues: uncharacterized protein (173 aa).

This is an uncharacterized protein from Acanthamoeba polyphaga (Amoeba).